A 342-amino-acid chain; its full sequence is Dihydroorotase (342 aa).

Zn(2+) is bound by residues histidine 13 and histidine 15. Substrate contacts are provided by residues histidine 15 to arginine 17 and asparagine 41. 3 residues coordinate Zn(2+): lysine 97, histidine 134, and histidine 172. At lysine 97 the chain carries N6-carboxylysine. Histidine 134 is a binding site for substrate. Residue leucine 217 coordinates substrate. Aspartate 245 serves as a coordination point for Zn(2+). Residue aspartate 245 is part of the active site. Substrate contacts are provided by histidine 249 and alanine 261.

This sequence belongs to the metallo-dependent hydrolases superfamily. DHOase family. Class II DHOase subfamily. As to quaternary structure, homodimer. The cofactor is Zn(2+).

It catalyses the reaction (S)-dihydroorotate + H2O = N-carbamoyl-L-aspartate + H(+). The protein operates within pyrimidine metabolism; UMP biosynthesis via de novo pathway; (S)-dihydroorotate from bicarbonate: step 3/3. Its function is as follows. Catalyzes the reversible cyclization of carbamoyl aspartate to dihydroorotate. The protein is Dihydroorotase of Shewanella amazonensis (strain ATCC BAA-1098 / SB2B).